The sequence spans 151 residues: MRLFIDGDAFPNTLKPILFRSIQRLNLEVFVVSNKPVTIGKSKLIRYLIVEQGADEADNHIVELVEEGDLVITADIPLADRVISKAAHAIDHRGELYSVDNIKHYLAMRNLMEKIRESGEMTKGPKPFNQKDAHQFANQLNKFLAKNIIKI.

The protein belongs to the UPF0178 family.

The polypeptide is UPF0178 protein Suden_0449 (Sulfurimonas denitrificans (strain ATCC 33889 / DSM 1251) (Thiomicrospira denitrificans (strain ATCC 33889 / DSM 1251))).